The chain runs to 176 residues: Ribosome maturation factor RimM (176 aa).

The region spanning 96–176 is the PRC barrel domain; sequence PEDEFYWRDL…QILVDWDPDF (81 aa).

The protein belongs to the RimM family. In terms of assembly, binds ribosomal protein uS19.

The protein localises to the cytoplasm. Its function is as follows. An accessory protein needed during the final step in the assembly of 30S ribosomal subunit, possibly for assembly of the head region. Essential for efficient processing of 16S rRNA. May be needed both before and after RbfA during the maturation of 16S rRNA. It has affinity for free ribosomal 30S subunits but not for 70S ribosomes. This chain is Ribosome maturation factor RimM, found in Shewanella piezotolerans (strain WP3 / JCM 13877).